A 571-amino-acid polypeptide reads, in one-letter code: Proline--tRNA ligase (571 aa).

This sequence belongs to the class-II aminoacyl-tRNA synthetase family. ProS type 1 subfamily. As to quaternary structure, homodimer.

It is found in the cytoplasm. It carries out the reaction tRNA(Pro) + L-proline + ATP = L-prolyl-tRNA(Pro) + AMP + diphosphate. In terms of biological role, catalyzes the attachment of proline to tRNA(Pro) in a two-step reaction: proline is first activated by ATP to form Pro-AMP and then transferred to the acceptor end of tRNA(Pro). As ProRS can inadvertently accommodate and process non-cognate amino acids such as alanine and cysteine, to avoid such errors it has two additional distinct editing activities against alanine. One activity is designated as 'pretransfer' editing and involves the tRNA(Pro)-independent hydrolysis of activated Ala-AMP. The other activity is designated 'posttransfer' editing and involves deacylation of mischarged Ala-tRNA(Pro). The misacylated Cys-tRNA(Pro) is not edited by ProRS. The protein is Proline--tRNA ligase of Haemophilus ducreyi (strain 35000HP / ATCC 700724).